A 312-amino-acid polypeptide reads, in one-letter code: Pantothenate synthetase (312 aa).

Residue 42-49 (MGALHTGH) coordinates ATP. His49 acts as the Proton donor in catalysis. A (R)-pantoate-binding site is contributed by Gln73. Gln73 is a beta-alanine binding site. Residue 159 to 162 (GEKD) coordinates ATP. Gln165 is a binding site for (R)-pantoate. ATP-binding positions include Val188 and 196–199 (LSSR).

It belongs to the pantothenate synthetase family. Homodimer.

Its subcellular location is the cytoplasm. It carries out the reaction (R)-pantoate + beta-alanine + ATP = (R)-pantothenate + AMP + diphosphate + H(+). It functions in the pathway cofactor biosynthesis; (R)-pantothenate biosynthesis; (R)-pantothenate from (R)-pantoate and beta-alanine: step 1/1. In terms of biological role, catalyzes the condensation of pantoate with beta-alanine in an ATP-dependent reaction via a pantoyl-adenylate intermediate. This chain is Pantothenate synthetase, found in Rhodococcus jostii (strain RHA1).